Here is a 311-residue protein sequence, read N- to C-terminus: Ribosomal RNA small subunit methyltransferase H (311 aa).

S-adenosyl-L-methionine-binding positions include G39–H41, D59, F87, D102, and H109.

It belongs to the methyltransferase superfamily. RsmH family.

Its subcellular location is the cytoplasm. It catalyses the reaction cytidine(1402) in 16S rRNA + S-adenosyl-L-methionine = N(4)-methylcytidine(1402) in 16S rRNA + S-adenosyl-L-homocysteine + H(+). Its function is as follows. Specifically methylates the N4 position of cytidine in position 1402 (C1402) of 16S rRNA. This Porphyromonas gingivalis (strain ATCC 33277 / DSM 20709 / CIP 103683 / JCM 12257 / NCTC 11834 / 2561) protein is Ribosomal RNA small subunit methyltransferase H.